The chain runs to 290 residues: Agmatinase (290 aa).

Mn(2+) is bound by residues His112, Asp135, His137, Asp139, Asp216, and Asp218.

The protein belongs to the arginase family. Agmatinase subfamily. Requires Mn(2+) as cofactor.

The enzyme catalyses agmatine + H2O = urea + putrescine. It participates in amine and polyamine biosynthesis; putrescine biosynthesis via agmatine pathway; putrescine from agmatine: step 1/1. In terms of biological role, catalyzes the formation of putrescine from agmatine. The polypeptide is Agmatinase (speB) (Bacillus anthracis).